We begin with the raw amino-acid sequence, 249 residues long: Octanoyltransferase (249 aa).

A disordered region spans residues 1 to 23 (MVNSPQNPRQDQRQDLDLTSFSA). Positions 57-241 (GEAPELVWLL…AFEELFGPTR (185 aa)) constitute a BPL/LPL catalytic domain. Substrate contacts are provided by residues 95-102 (RGGQLTYH), 170-172 (AIG), and 183-185 (GIA). The active-site Acyl-thioester intermediate is C201.

The protein belongs to the LipB family.

The protein localises to the cytoplasm. The enzyme catalyses octanoyl-[ACP] + L-lysyl-[protein] = N(6)-octanoyl-L-lysyl-[protein] + holo-[ACP] + H(+). The protein operates within protein modification; protein lipoylation via endogenous pathway; protein N(6)-(lipoyl)lysine from octanoyl-[acyl-carrier-protein]: step 1/2. Functionally, catalyzes the transfer of endogenously produced octanoic acid from octanoyl-acyl-carrier-protein onto the lipoyl domains of lipoate-dependent enzymes. Lipoyl-ACP can also act as a substrate although octanoyl-ACP is likely to be the physiological substrate. The protein is Octanoyltransferase of Bradyrhizobium diazoefficiens (strain JCM 10833 / BCRC 13528 / IAM 13628 / NBRC 14792 / USDA 110).